A 388-amino-acid chain; its full sequence is 3-oxo-tetronate kinase (388 aa).

ATP-binding positions include Ser-258 and 360–363; that span reads GGET.

It belongs to the four-carbon acid sugar kinase family.

It catalyses the reaction 3-dehydro-L-erythronate + ATP = 3-dehydro-4-O-phospho-L-erythronate + ADP + H(+). The enzyme catalyses 3-dehydro-D-erythronate + ATP = 3-dehydro-4-O-phospho-D-erythronate + ADP + H(+). In terms of biological role, catalyzes the ATP-dependent phosphorylation of 3-oxo-tetronate to 3-oxo-tetronate 4-phosphate. The chain is 3-oxo-tetronate kinase from Escherichia coli (strain K12).